The sequence spans 698 residues: Elongation factor G 1 (698 aa).

Residues 8–290 enclose the tr-type G domain; it reads ERYRNIGICA…AVVEFLPAPV (283 aa). GTP-binding positions include 17-24, 88-92, and 142-145; these read AHVDAGKT, DTPGH, and NKMD.

This sequence belongs to the TRAFAC class translation factor GTPase superfamily. Classic translation factor GTPase family. EF-G/EF-2 subfamily.

The protein resides in the cytoplasm. Catalyzes the GTP-dependent ribosomal translocation step during translation elongation. During this step, the ribosome changes from the pre-translocational (PRE) to the post-translocational (POST) state as the newly formed A-site-bound peptidyl-tRNA and P-site-bound deacylated tRNA move to the P and E sites, respectively. Catalyzes the coordinated movement of the two tRNA molecules, the mRNA and conformational changes in the ribosome. This Shewanella oneidensis (strain ATCC 700550 / JCM 31522 / CIP 106686 / LMG 19005 / NCIMB 14063 / MR-1) protein is Elongation factor G 1.